Here is a 271-residue protein sequence, read N- to C-terminus: Probable WRKY transcription factor 69 (271 aa).

Disordered regions lie at residues 1 to 47 (MHRR…NVEK) and 130 to 166 (PSSS…TVTA). The span at 9 to 18 (ESDDEEDETY) shows a compositional bias: acidic residues. The segment at residues 64–130 (GEVYPPSDSW…YACDHNHPFP (67 aa)) is a DNA-binding region (WRKY).

This sequence belongs to the WRKY group II-e family.

The protein resides in the nucleus. In terms of biological role, transcription factor. Interacts specifically with the W box (5'-(T)TGAC[CT]-3'), a frequently occurring elicitor-responsive cis-acting element. This Arabidopsis thaliana (Mouse-ear cress) protein is Probable WRKY transcription factor 69 (WRKY69).